A 643-amino-acid polypeptide reads, in one-letter code: MSFIMSSLRNLFLSPLRSFIQKDFHDAFDSMTLLDKLLFMMVHFVDKLILWHRLPVFLGLAYLAARRHLHQEYNLINVGRTPTGVRSNPEDYPYRTADGKYNDPFNEGAGSQFSFFGRNVMPVDQHDKLKKPDPMVVATKLLARKNFMDTGKQFNMIAASWIQFMIHDWIDHLEDTHQIELRAPEEVASECPLKSFKFYKSKKTPTGFYEIKTGYLNRRTSWWDGSAIYGSNTEALKKVRTFEDGKLKLSADGLLEQDENGNIISGDVRNPWAGLLALQALFIQEHNLVCDTLKKEYPKLEDEDLYRHARLVTSAVIAKVHTIDWTVELLKTDTLLAGMRANWYGLLGKKFKDTFGHVGGSSLGGFVGMKKPENHGVPYSLTEEFVSVYRMHQLLPDTLQLRNIDATPGPNKSLPLTNEIPMEDLIGGKGEENLSRIGYTKQMVSMGHQACGALELMNYPIWMRDLIPQDVDGNDRPDHIDLAALEIYRDRERSVARYNEFRRRMLQIPISKWEDLTDDEEAIKMLREVYGDDVEELDLLVGMSAEKKIKGFAISETAFFIFLIMASRRLEADKFFTSNYNEETYTKKGLEWVNTTESLKDVLDRHYPEMTGKWMNSNSAFSVWDSSPEPHNPIPIYFRVPQQ.

His-167 functions as the Proton acceptor in the catalytic mechanism. Asp-168 provides a ligand contact to Ca(2+). His-172 is a heme b binding site. Residues Thr-220, Trp-222, Asp-224, and Ser-226 each contribute to the Ca(2+) site. Residues His-392, Arg-489, and Arg-493 each contribute to the heme b site.

Belongs to the peroxidase family. The cofactor is heme b. Requires Ca(2+) as cofactor.

Functionally, alpha-dioxygenase that catalyzes the primary oxygenation step of a variety of 14-20 carbon fatty acids, containing up to three unsaturated bonds, into their corresponding 2R-hydroperoxides. Involved in the production of oxylipins that function in cell signaling, wound healing, and protection from infection. The lipid-derived signaling pathway is involved in the initial response of hot pepper plants to pathogen infection. This Capsicum annuum (Capsicum pepper) protein is Alpha-dioxygenase 1.